The primary structure comprises 48 residues: Large ribosomal subunit protein bL33A (48 aa).

This sequence belongs to the bacterial ribosomal protein bL33 family.

This Bacillus anthracis protein is Large ribosomal subunit protein bL33A.